The chain runs to 358 residues: Uroporphyrinogen decarboxylase (358 aa).

Substrate is bound by residues 36 to 40 (RQAGR), Asp-85, Tyr-160, Ser-215, and His-338.

This sequence belongs to the uroporphyrinogen decarboxylase family. In terms of assembly, homodimer.

It localises to the cytoplasm. It carries out the reaction uroporphyrinogen III + 4 H(+) = coproporphyrinogen III + 4 CO2. Its pathway is porphyrin-containing compound metabolism; protoporphyrin-IX biosynthesis; coproporphyrinogen-III from 5-aminolevulinate: step 4/4. Functionally, catalyzes the decarboxylation of four acetate groups of uroporphyrinogen-III to yield coproporphyrinogen-III. In Corynebacterium glutamicum (strain ATCC 13032 / DSM 20300 / JCM 1318 / BCRC 11384 / CCUG 27702 / LMG 3730 / NBRC 12168 / NCIMB 10025 / NRRL B-2784 / 534), this protein is Uroporphyrinogen decarboxylase.